Here is a 133-residue protein sequence, read N- to C-terminus: ATP synthase epsilon chain (133 aa).

The protein belongs to the ATPase epsilon chain family. As to quaternary structure, F-type ATPases have 2 components, CF(1) - the catalytic core - and CF(0) - the membrane proton channel. CF(1) has five subunits: alpha(3), beta(3), gamma(1), delta(1), epsilon(1). CF(0) has three main subunits: a, b and c.

It localises to the cell membrane. Its function is as follows. Produces ATP from ADP in the presence of a proton gradient across the membrane. The protein is ATP synthase epsilon chain of Bacillus anthracis (strain A0248).